The sequence spans 615 residues: DNA mismatch repair protein MutL (615 aa).

Residues 363-397 (FAEPAAREPVAPRYTPAPASGSRPAAPWPNAQPGY) are disordered. Residues 364–391 (AEPAAREPVAPRYTPAPASGSRPAAPWP) are compositionally biased toward low complexity.

It belongs to the DNA mismatch repair MutL/HexB family.

This protein is involved in the repair of mismatches in DNA. It is required for dam-dependent methyl-directed DNA mismatch repair. May act as a 'molecular matchmaker', a protein that promotes the formation of a stable complex between two or more DNA-binding proteins in an ATP-dependent manner without itself being part of a final effector complex. The polypeptide is DNA mismatch repair protein MutL (Escherichia coli (strain K12 / MC4100 / BW2952)).